A 228-amino-acid chain; its full sequence is MIPKLLKHELTFPHPNDATEDGIVAWGGDLNPSRLIRAYQNGIFPWYGKNDPIIWWSPNPRLIMELDDFKLSRSLRKSMKKFEYRFDTNFINVMKNCQNIKRVKQDGTWIQDEIIEAYSVLHDMGIAHSVESYLDGELVGGLYGVAVGGLFCGESMFTLVNDASKSAYAVLINHLKIWGYDFIDAQVPTEHLKNLGAKEVSRDYFLDRLHKVNMNIINHKWELLHVNT.

Belongs to the L/F-transferase family.

The protein localises to the cytoplasm. It carries out the reaction N-terminal L-lysyl-[protein] + L-leucyl-tRNA(Leu) = N-terminal L-leucyl-L-lysyl-[protein] + tRNA(Leu) + H(+). The catalysed reaction is N-terminal L-arginyl-[protein] + L-leucyl-tRNA(Leu) = N-terminal L-leucyl-L-arginyl-[protein] + tRNA(Leu) + H(+). The enzyme catalyses L-phenylalanyl-tRNA(Phe) + an N-terminal L-alpha-aminoacyl-[protein] = an N-terminal L-phenylalanyl-L-alpha-aminoacyl-[protein] + tRNA(Phe). In terms of biological role, functions in the N-end rule pathway of protein degradation where it conjugates Leu, Phe and, less efficiently, Met from aminoacyl-tRNAs to the N-termini of proteins containing an N-terminal arginine or lysine. This is Leucyl/phenylalanyl-tRNA--protein transferase from Sulfurimonas denitrificans (strain ATCC 33889 / DSM 1251) (Thiomicrospira denitrificans (strain ATCC 33889 / DSM 1251)).